The sequence spans 144 residues: Large ribosomal subunit protein uL16 (144 aa).

The protein belongs to the universal ribosomal protein uL16 family. In terms of assembly, part of the 50S ribosomal subunit.

In terms of biological role, binds 23S rRNA and is also seen to make contacts with the A and possibly P site tRNAs. This Natranaerobius thermophilus (strain ATCC BAA-1301 / DSM 18059 / JW/NM-WN-LF) protein is Large ribosomal subunit protein uL16.